The chain runs to 460 residues: Carboxypeptidase DacB (460 aa).

Positions 1 to 28 (MRPTRWRRSTHVAVGVAVLALVVAVVAA) are cleaved as a signal peptide. Residues 39–64 (AAEAVPPAPPPATADPGVVPVDLSAP) form a disordered region. Serine 113 serves as the catalytic Acyl-ester intermediate. Lysine 116 functions as the Proton acceptor in the catalytic mechanism. Serine 294 is a catalytic residue.

This sequence belongs to the peptidase S13 family.

In terms of biological role, carboxypeptidase that cleaves terminal D-alanine from peptidoglycan in the mycobacterial cell wall. May cleave L-Lys-D-Ala and/or D-Ala-D-Ala peptide bonds. Exerts important effects on mycobacterial cell morphology and cell division. The chain is Carboxypeptidase DacB from Mycolicibacterium smegmatis (strain ATCC 700084 / mc(2)155) (Mycobacterium smegmatis).